Consider the following 722-residue polypeptide: Polyribonucleotide nucleotidyltransferase (722 aa).

Residues D486 and D492 each contribute to the Mg(2+) site. The KH domain maps to 553-612 (PKIVQLQIDIDKISLVIGSTGKTVKAITDEFEVKVQIEQNGKIILFGDDDFKMQKAKERI). Residues 622 to 717 (GEIYEGTVKK…KFGKIDLEIV (96 aa)) form the S1 motif domain.

Belongs to the polyribonucleotide nucleotidyltransferase family. The cofactor is Mg(2+).

The protein resides in the cytoplasm. The enzyme catalyses RNA(n+1) + phosphate = RNA(n) + a ribonucleoside 5'-diphosphate. In terms of biological role, involved in mRNA degradation. Catalyzes the phosphorolysis of single-stranded polyribonucleotides processively in the 3'- to 5'-direction. In Borreliella burgdorferi (strain ZS7) (Borrelia burgdorferi), this protein is Polyribonucleotide nucleotidyltransferase.